The chain runs to 151 residues: Large ribosomal subunit protein uL15 (151 aa).

Residues 1-45 (MNLSSLKPVKGSTKTCKRVGRGQGSGCGGTSTRGHKGQKSRSGYS) form a disordered region. A compositionally biased stretch (gly residues) spans 21–31 (RGQGSGCGGTS).

This sequence belongs to the universal ribosomal protein uL15 family. As to quaternary structure, part of the 50S ribosomal subunit.

Its function is as follows. Binds to the 23S rRNA. This is Large ribosomal subunit protein uL15 from Azobacteroides pseudotrichonymphae genomovar. CFP2.